The following is a 566-amino-acid chain: Deformed epidermal autoregulatory factor 1 homolog (566 aa).

Disordered regions lie at residues 33–62 (AESE…ETRR) and 163–191 (GLKG…KGGT). Pro residues predominate over residues 170-182 (PLTPGPQSPPTPL). Phosphothreonine is present on threonine 172. A Phosphoserine modification is found at serine 177. Phosphothreonine is present on threonine 180. An SAND domain is found at 194–274 (NWDPSVYDSE…QCLIQDGILN (81 aa)). Residues 300-306 (PYKRRKK) carry the Nuclear localization signal motif. Residues 404–479 (IAPFPEAALP…QLKTLFEQAK (76 aa)) form an interaction with LMO4 region. Phosphothreonine is present on threonine 433. A phosphoserine mark is found at serine 444 and serine 449. Zn(2+)-binding residues include cysteine 505, cysteine 508, cysteine 516, cysteine 519, cysteine 525, cysteine 529, histidine 537, and cysteine 541. The segment at 505–541 (CVNCGREAMSECTGCHKVNYCSTFCQRKDWKDHQHVC) adopts an MYND-type zinc-finger fold.

Homodimer. Isoform 1 and isoform 2 may form a heterodimer. May interact with the corepressors NCOR1 and NCRO2. Identified in a complex with XRCC5 and XRCC6. Interacts (via the SAND domain) with the DNA-PK complex subunit XRCC6; the interaction is direct with XRCC6 and may be inhibited by DNA-binding. Interacts with LMO4; LMO4 blocks export from nucleus. Interacts with LMO2 and CLIM2. May be phosphorylated by DNA-PK complex in a DNA independent manner (in vitro). As to expression, ubiquitously expressed during embryogenesis, with higher expression in regions of the central nervous system, dorsal root ganglia, submandibular gland, epidermis and breast. In 12-week-old NOD mice, expression of isoform 2 is sevenfold higher in lymph node stromal elements than in T-cells and tenfold higher than in B-cells.

It localises to the nucleus. The protein localises to the cytoplasm. Functionally, transcription factor that binds to sequence with multiple copies of 5'-TTC[CG]G-3' present in its own promoter and that of the HNRPA2B1 gene. Down-regulates transcription of these genes. Binds to the retinoic acid response element (RARE) 5'-AGGGTTCACCGAAAGTTCA-3'. Activates the proenkephalin gene independently of promoter binding, probably through protein-protein interaction. Regulates epithelial cell proliferation and side-branching in the mammary gland. Required for neural tube closure and skeletal patterning. Controls the expression of peripheral tissue antigens in pancreatic lymph nodes. Isoform 1 displays greater transcriptional activity than isoform 2. Isoform 2 may inhibit transcriptional activity of isoform 1 by interacting with it and retaining it in the cytoplasm. Transcriptional activator of EIF4G3. May also involved in behavior. In Mus musculus (Mouse), this protein is Deformed epidermal autoregulatory factor 1 homolog (Deaf1).